Reading from the N-terminus, the 243-residue chain is uncharacterized protein (243 aa).

Positions 207-224 (KKTSISGYKTLDVKRKFV) match the Bipartite nuclear localization signal motif.

This is an uncharacterized protein from Acheta domesticus (House cricket).